Consider the following 411-residue polypeptide: Putative competence-damage inducible protein (411 aa).

Belongs to the CinA family.

The sequence is that of Putative competence-damage inducible protein from Desulforamulus reducens (strain ATCC BAA-1160 / DSM 100696 / MI-1) (Desulfotomaculum reducens).